The following is a 1090-amino-acid chain: UPF0507 protein SCRG_01893 (1090 aa).

A VPS9 domain is found at 289 to 436 (FSVNQLLTDF…FEDFNKNTGN (148 aa)).

It belongs to the UPF0507 family.

The polypeptide is UPF0507 protein SCRG_01893 (Saccharomyces cerevisiae (strain RM11-1a) (Baker's yeast)).